We begin with the raw amino-acid sequence, 323 residues long: tRNA dimethylallyltransferase (323 aa).

ATP is bound at residue 13–20 (GPTASGKT). Residue 15 to 20 (TASGKT) coordinates substrate. 4 interaction with substrate tRNA regions span residues 42–45 (DSAL), 166–170 (QRIQR), 251–256 (RCVGYR), and 284–291 (KRQITWLR).

It belongs to the IPP transferase family. As to quaternary structure, monomer. The cofactor is Mg(2+).

It carries out the reaction adenosine(37) in tRNA + dimethylallyl diphosphate = N(6)-dimethylallyladenosine(37) in tRNA + diphosphate. Functionally, catalyzes the transfer of a dimethylallyl group onto the adenine at position 37 in tRNAs that read codons beginning with uridine, leading to the formation of N6-(dimethylallyl)adenosine (i(6)A). The chain is tRNA dimethylallyltransferase from Acidovorax sp. (strain JS42).